The following is a 224-amino-acid chain: 7-cyano-7-deazaguanine synthase (224 aa).

Residue 10–20 (LSGGLDSATVV) coordinates ATP. Zn(2+)-binding residues include C189, C199, C202, and C205.

The protein belongs to the QueC family. Requires Zn(2+) as cofactor.

The catalysed reaction is 7-carboxy-7-deazaguanine + NH4(+) + ATP = 7-cyano-7-deazaguanine + ADP + phosphate + H2O + H(+). It participates in purine metabolism; 7-cyano-7-deazaguanine biosynthesis. Catalyzes the ATP-dependent conversion of 7-carboxy-7-deazaguanine (CDG) to 7-cyano-7-deazaguanine (preQ(0)). In Pseudomonas aeruginosa (strain LESB58), this protein is 7-cyano-7-deazaguanine synthase.